Reading from the N-terminus, the 578-residue chain is NADH-quinone oxidoreductase subunit C/D (578 aa).

Residues methionine 1–glutamate 167 form an NADH dehydrogenase I subunit C region. The interval glutamate 192 to arginine 578 is NADH dehydrogenase I subunit D.

This sequence in the N-terminal section; belongs to the complex I 30 kDa subunit family. The protein in the C-terminal section; belongs to the complex I 49 kDa subunit family. As to quaternary structure, NDH-1 is composed of 13 different subunits. Subunits NuoB, CD, E, F, and G constitute the peripheral sector of the complex.

It localises to the cell inner membrane. The catalysed reaction is a quinone + NADH + 5 H(+)(in) = a quinol + NAD(+) + 4 H(+)(out). NDH-1 shuttles electrons from NADH, via FMN and iron-sulfur (Fe-S) centers, to quinones in the respiratory chain. The immediate electron acceptor for the enzyme in this species is believed to be ubiquinone. Couples the redox reaction to proton translocation (for every two electrons transferred, four hydrogen ions are translocated across the cytoplasmic membrane), and thus conserves the redox energy in a proton gradient. The chain is NADH-quinone oxidoreductase subunit C/D from Buchnera aphidicola subsp. Cinara cedri (strain Cc).